We begin with the raw amino-acid sequence, 191 residues long: Protein YceI (191 aa).

The first 22 residues, 1–22 (MKKSLLGLTFASLMFSAGSAVA), serve as a signal peptide directing secretion.

This sequence belongs to the UPF0312 family. Type 1 subfamily.

The protein localises to the periplasm. This Escherichia coli O6:H1 (strain CFT073 / ATCC 700928 / UPEC) protein is Protein YceI.